The following is a 785-amino-acid chain: Pre-rRNA-processing protein TSR1 homolog (785 aa).

The segment at 1 to 59 is disordered; that stretch reads MSTTGHRAGVFKKPSKPHKSWKGKRTKGEITSENRGREGVKQLTRSAHSTHRTISKDAR. Over residues 9–25 the composition is skewed to basic residues; sequence GVFKKPSKPHKSWKGKR. Residues 26–40 show a composition bias toward basic and acidic residues; the sequence is TKGEITSENRGREGV. The 161-residue stretch at 83-243 folds into the Bms1-type G domain; it reads APCLVTVVSL…LRILNETKKK (161 aa). A disordered region spans residues 307–426; it reads PHPLKAHNKT…GETTASEMMF (120 aa). Acidic residues predominate over residues 376–409; that stretch reads LDDEDDEDEEDSDEDMDDSDNEEVEDDSEEEEPM.

The protein belongs to the TRAFAC class translation factor GTPase superfamily. Bms1-like GTPase family. TSR1 subfamily.

The protein localises to the nucleus. It is found in the nucleolus. In terms of biological role, required during maturation of the 40S ribosomal subunit in the nucleolus. The sequence is that of Pre-rRNA-processing protein TSR1 homolog (tag-151) from Caenorhabditis elegans.